The primary structure comprises 1065 residues: WD repeat-containing protein on Y chromosome (1065 aa).

WD repeat units lie at residues 153 to 197, 326 to 365, 369 to 408, 459 to 498, 511 to 550, 598 to 638, 745 to 784, and 828 to 867; these read EEVT…IRTA, RVPL…EPSA, GHNG…LLQT, THAA…RKII, IIDI…VVRN, FHTD…RRYS, KTGD…VPEA, and AHLK…LGTL. Over residues 915–925 the composition is skewed to basic and acidic residues; sequence PAKRAEVKAPE. Disordered regions lie at residues 915–936 and 1024–1065; these read PAKR…QTDD and GSAL…QQSE. Residues 926 to 936 are compositionally biased toward acidic residues; the sequence is DRDEETAQTDD.

This chain is WD repeat-containing protein on Y chromosome, found in Drosophila persimilis (Fruit fly).